We begin with the raw amino-acid sequence, 594 residues long: DNA mismatch repair protein MutL (594 aa).

The protein belongs to the DNA mismatch repair MutL/HexB family.

Its function is as follows. This protein is involved in the repair of mismatches in DNA. It is required for dam-dependent methyl-directed DNA mismatch repair. May act as a 'molecular matchmaker', a protein that promotes the formation of a stable complex between two or more DNA-binding proteins in an ATP-dependent manner without itself being part of a final effector complex. The polypeptide is DNA mismatch repair protein MutL (Tolumonas auensis (strain DSM 9187 / NBRC 110442 / TA 4)).